A 252-amino-acid polypeptide reads, in one-letter code: Probable transcriptional regulatory protein CE1776 (252 aa).

The interval 1–22 is disordered; sequence MAGHSKWATTKHKKAANDAKRG.

It belongs to the TACO1 family.

The protein localises to the cytoplasm. The chain is Probable transcriptional regulatory protein CE1776 from Corynebacterium efficiens (strain DSM 44549 / YS-314 / AJ 12310 / JCM 11189 / NBRC 100395).